Consider the following 332-residue polypeptide: MNKKTLVSGITSTGKLTLGNYIGAIRNFVKLQDEFNMFIFVADLHSLTNEIVPSVLRKNIKEIAALYLACGLDPEKTVLFKQSDVYEHGLMQWILLNQTTIGELSRMTQFKDKSSKITHANNTESIPSGLLTYPTLMAADILLYNPNLVPVGQDQVQHLELTRKIARKLNNKYNTKFNEPTTFVPETGAKIMSLTNPTKKMSKSSDDINGTIFLLEDPELAYKKIKKSITDSENKVYHDPSKPGVSNLLEIYACLENKSLKEAQEIFKDKNYLELKEGVGNSVKNFLTKLQAKYQENYKRVDEILNQGKIKAQKVASYNLNNLMKKIGIRDK.

ATP-binding positions include 11–13 and 19–20; these read TST and GN. The 'HIGH' region motif lies at 12-20; it reads STGKLTLGN. Asp140 lines the L-tryptophan pocket. ATP contacts are provided by residues 152–154, Ile191, and 200–204; these read GQD and KMSKS. The 'KMSKS' region signature appears at 200–204; sequence KMSKS.

It belongs to the class-I aminoacyl-tRNA synthetase family. Homodimer.

The protein localises to the cytoplasm. It carries out the reaction tRNA(Trp) + L-tryptophan + ATP = L-tryptophyl-tRNA(Trp) + AMP + diphosphate + H(+). Catalyzes the attachment of tryptophan to tRNA(Trp). This is Tryptophan--tRNA ligase from Mycoplasmopsis pulmonis (strain UAB CTIP) (Mycoplasma pulmonis).